The sequence spans 160 residues: RxLR effector protein PexRD44 (160 aa).

The first 21 residues, 1–21 (MRLLLWVLISMLSIALSSCAA), serve as a signal peptide directing secretion. A RxLR-dEER motif is present at residues 54-76 (RFLRGESSKIVNLKQEEGVFEER).

The protein belongs to the RxLR effector family.

It is found in the secreted. The protein localises to the host cell membrane. It localises to the host nucleus. Its subcellular location is the host nucleolus. Its function is as follows. Effector that is involved in host plant infection. Contributes to virulence during the early infection stage, by inhibiting plant defense responses induced by both PAMP-triggered immunity (PTI) and effector-triggered immunity (ETI). The protein is RxLR effector protein PexRD44 of Phytophthora infestans (strain T30-4) (Potato late blight agent).